The chain runs to 421 residues: 3-phosphoshikimate 1-carboxyvinyltransferase (421 aa).

K20, S21, and R25 together coordinate 3-phosphoshikimate. K20 is a binding site for phosphoenolpyruvate. Phosphoenolpyruvate contacts are provided by G90 and R117. 6 residues coordinate 3-phosphoshikimate: S162, S163, Q164, S190, D304, and K331. Q164 is a phosphoenolpyruvate binding site. The active-site Proton acceptor is the D304. R335 and R376 together coordinate phosphoenolpyruvate.

The protein belongs to the EPSP synthase family. As to quaternary structure, monomer.

It is found in the cytoplasm. The catalysed reaction is 3-phosphoshikimate + phosphoenolpyruvate = 5-O-(1-carboxyvinyl)-3-phosphoshikimate + phosphate. It participates in metabolic intermediate biosynthesis; chorismate biosynthesis. In terms of biological role, catalyzes the transfer of the enolpyruvyl moiety of phosphoenolpyruvate (PEP) to the 5-hydroxyl of shikimate-3-phosphate (S3P) to produce enolpyruvyl shikimate-3-phosphate and inorganic phosphate. The sequence is that of 3-phosphoshikimate 1-carboxyvinyltransferase from Methanothrix thermoacetophila (strain DSM 6194 / JCM 14653 / NBRC 101360 / PT) (Methanosaeta thermophila).